The primary structure comprises 306 residues: Putative F-box protein At1g47300 (306 aa).

In terms of domain architecture, F-box spans 1–45 (MISDSIPKELILEIMLRLPAKSIARFHCVSKQWASMLSRPYFTEL). Positions 235 to 278 (DPKLLESKEEEEEEEEEEEEEEEEEEEEEEEEEEEESKEREKEK) are disordered. Acidic residues predominate over residues 242–270 (KEEEEEEEEEEEEEEEEEEEEEEEEEEEE).

This chain is Putative F-box protein At1g47300, found in Arabidopsis thaliana (Mouse-ear cress).